The chain runs to 344 residues: S-adenosylmethionine:tRNA ribosyltransferase-isomerase (344 aa).

This sequence belongs to the QueA family. In terms of assembly, monomer.

Its subcellular location is the cytoplasm. It catalyses the reaction 7-aminomethyl-7-carbaguanosine(34) in tRNA + S-adenosyl-L-methionine = epoxyqueuosine(34) in tRNA + adenine + L-methionine + 2 H(+). It functions in the pathway tRNA modification; tRNA-queuosine biosynthesis. Its function is as follows. Transfers and isomerizes the ribose moiety from AdoMet to the 7-aminomethyl group of 7-deazaguanine (preQ1-tRNA) to give epoxyqueuosine (oQ-tRNA). The chain is S-adenosylmethionine:tRNA ribosyltransferase-isomerase from Rhizorhabdus wittichii (strain DSM 6014 / CCUG 31198 / JCM 15750 / NBRC 105917 / EY 4224 / RW1) (Sphingomonas wittichii).